A 299-amino-acid polypeptide reads, in one-letter code: Taste receptor type 2 member 1 (299 aa).

The Extracellular portion of the chain corresponds to 1–9; the sequence is MLESHLIIY. Residues 10-30 traverse the membrane as a helical segment; that stretch reads FLLAVIQFLLGIFTNGIIVVV. Residues 31 to 55 lie on the Cytoplasmic side of the membrane; sequence NGIDLIKHRKMAPLDLLLSCLAVSR. Residues 56–76 traverse the membrane as a helical segment; it reads IFLQLFIFYVNVIVIFFIEFI. The Extracellular portion of the chain corresponds to 77 to 81; sequence MCSAN. A helical transmembrane segment spans residues 82–102; sequence CAILLFINELELWLATWLGVF. Residues 103–124 are Cytoplasmic-facing; that stretch reads YCAKVASVRHPLFXWLKMRISK. The helical transmembrane segment at 125-145 threads the bilayer; that stretch reads LVPWMILGSLLYVSMICVFHS. At 146–178 the chain is on the extracellular side; that stretch reads KYAGFMVPYFLRNFFSQNTTIQKEDTLAIQIFS. An N-linked (GlcNAc...) asparagine glycan is attached at Asn-163. The chain crosses the membrane as a helical span at residues 179–199; the sequence is FVAEFSVPLLIFLVAVLLLIF. Topologically, residues 200–222 are cytoplasmic; the sequence is SLGRHTRQMRNTVAGSRVPGRGA. Residues 223 to 243 traverse the membrane as a helical segment; it reads PISALLSILSFLILYFSHCMI. Over 244–257 the chain is Extracellular; sequence KVFLSSLKFHIRRF. A helical membrane pass occupies residues 258–278; it reads IFLFFILVIGIYPSGHSLILI. The Cytoplasmic portion of the chain corresponds to 279 to 299; the sequence is LGNPKLKQNAKKFLLHSKCCQ.

The protein belongs to the G-protein coupled receptor T2R family.

It localises to the membrane. Its function is as follows. Receptor that may play a role in the perception of bitterness and is gustducin-linked. May play a role in sensing the chemical composition of the gastrointestinal content. The activity of this receptor may stimulate alpha gustducin, mediate PLC-beta-2 activation and lead to the gating of TRPM5. The protein is Taste receptor type 2 member 1 (TAS2R1) of Gorilla gorilla gorilla (Western lowland gorilla).